A 349-amino-acid chain; its full sequence is UPF0283 membrane protein Ent638_2153 (349 aa).

The next 3 helical transmembrane spans lie at 70–90 (MVTA…VQWT), 99–119 (WVAL…VGSV), and 213–233 (ESTL…FIAW).

This sequence belongs to the UPF0283 family.

It is found in the cell inner membrane. This is UPF0283 membrane protein Ent638_2153 from Enterobacter sp. (strain 638).